The following is a 106-amino-acid chain: Cell division topological specificity factor (106 aa).

The protein belongs to the MinE family.

Its function is as follows. Prevents the cell division inhibition by proteins MinC and MinD at internal division sites while permitting inhibition at polar sites. This ensures cell division at the proper site by restricting the formation of a division septum at the midpoint of the long axis of the cell. This Prochlorococcus marinus subsp. pastoris (strain CCMP1986 / NIES-2087 / MED4) protein is Cell division topological specificity factor.